The sequence spans 269 residues: Fructose permease IIC component (269 aa).

A PTS EIIC type-4 domain is found at 1 to 234; sequence MSSLQIILLL…GALGLCLALL (234 aa). A run of 7 helical transmembrane segments spans residues 2 to 22, 35 to 54, 64 to 86, 90 to 110, 149 to 169, 181 to 201, and 206 to 226; these read SSLQIILLLIIAAITGIASVL, TLVGLVLGDLKTGIILGGTL, VGLAMAPDTAIASVISTILVITA, IGEGIAVAVALAAAGQALTIF, VMIPTLIVALISVSAVQAFLG, IGGGIIVVVGYAMVINMMNIP, and FFYIGFLLAAFTDFNLVGFGA.

Its subcellular location is the cell membrane. Functionally, the phosphoenolpyruvate-dependent sugar phosphotransferase system (PTS), a major carbohydrate active -transport system, catalyzes the phosphorylation of incoming sugar substrates concomitant with their translocation across the cell membrane. This system is involved in fructose transport. The protein is Fructose permease IIC component (levF) of Bacillus subtilis (strain 168).